The sequence spans 88 residues: Phosphocarrier protein HPr (88 aa).

The region spanning 1-88 (MEKRDFHVVA…ETMKKEGLSE (88 aa)) is the HPr domain. The active-site Pros-phosphohistidine intermediate is His15. Ser46 is modified (phosphoserine; by HPrK/P).

This sequence belongs to the HPr family.

Its subcellular location is the cytoplasm. Phosphorylation on Ser-46 inhibits the phosphoryl transfer from enzyme I to HPr. General (non sugar-specific) component of the phosphoenolpyruvate-dependent sugar phosphotransferase system (sugar PTS). This major carbohydrate active-transport system catalyzes the phosphorylation of incoming sugar substrates concomitantly with their translocation across the cell membrane. The phosphoryl group from phosphoenolpyruvate (PEP) is transferred to the phosphoryl carrier protein HPr by enzyme I. Phospho-HPr then transfers it to the PTS EIIA domain. Functionally, P-Ser-HPr interacts with the catabolite control protein A (CcpA), forming a complex that binds to DNA at the catabolite response elements cre, operator sites preceding a large number of catabolite-regulated genes. Thus, P-Ser-HPr is a corepressor in carbon catabolite repression (CCR), a mechanism that allows bacteria to coordinate and optimize the utilization of available carbon sources. P-Ser-HPr also plays a role in inducer exclusion, in which it probably interacts with several non-PTS permeases and inhibits their transport activity. The polypeptide is Phosphocarrier protein HPr (ptsH) (Latilactobacillus sakei (Lactobacillus sakei)).